The chain runs to 314 residues: MSPRELVVLGTAGQAPTRTRNHNGYLLRWDGTSVLFDPGEGTQRQMLHAEVSAPRIERICVTHRHNDHCLGVPGVLNRMAQDGPGRPVTLHGPDDAFEHLRALAVVAAAHVEVTVEGIPVRDEPVEVARVAGARLSARALDHRVPTVGYRLEEPAGRSFDAAALADAGITGPDVGELQRRGELRGVRLADVSVERPGQVFGFVMDTRDHPAVVDLVRDADLAVLECTYSERHADLARDRGHLTARQAGRAAARAGVRTLVLAHFSQRYPDLEELAAEARAAVAELGGRTRVHLAHDLDVVPVPPRRSAPARAAS.

The Zn(2+) site is built by histidine 63, histidine 65, aspartate 67, histidine 68, histidine 142, aspartate 205, and histidine 263. Aspartate 67 functions as the Proton acceptor in the catalytic mechanism.

It belongs to the RNase Z family. In terms of assembly, homodimer. The cofactor is Zn(2+).

It catalyses the reaction Endonucleolytic cleavage of RNA, removing extra 3' nucleotides from tRNA precursor, generating 3' termini of tRNAs. A 3'-hydroxy group is left at the tRNA terminus and a 5'-phosphoryl group is left at the trailer molecule.. Zinc phosphodiesterase, which displays some tRNA 3'-processing endonuclease activity. Probably involved in tRNA maturation, by removing a 3'-trailer from precursor tRNA. This is Ribonuclease Z from Kineococcus radiotolerans (strain ATCC BAA-149 / DSM 14245 / SRS30216).